A 401-amino-acid polypeptide reads, in one-letter code: 1-deoxy-D-xylulose 5-phosphate reductoisomerase (401 aa).

Residues threonine 10, glycine 11, serine 12, isoleucine 13, glycine 36, asparagine 38, and asparagine 124 each coordinate NADPH. Lysine 125 is a 1-deoxy-D-xylulose 5-phosphate binding site. Glutamate 126 contacts NADPH. Residue aspartate 150 coordinates Mn(2+). Serine 151, glutamate 152, serine 186, and histidine 209 together coordinate 1-deoxy-D-xylulose 5-phosphate. Glutamate 152 is a Mn(2+) binding site. Glycine 215 contacts NADPH. 1-deoxy-D-xylulose 5-phosphate is bound by residues serine 222, asparagine 227, lysine 228, and glutamate 231. Glutamate 231 is a Mn(2+) binding site.

Belongs to the DXR family. Mg(2+) serves as cofactor. Mn(2+) is required as a cofactor.

It catalyses the reaction 2-C-methyl-D-erythritol 4-phosphate + NADP(+) = 1-deoxy-D-xylulose 5-phosphate + NADPH + H(+). Its pathway is isoprenoid biosynthesis; isopentenyl diphosphate biosynthesis via DXP pathway; isopentenyl diphosphate from 1-deoxy-D-xylulose 5-phosphate: step 1/6. Functionally, catalyzes the NADPH-dependent rearrangement and reduction of 1-deoxy-D-xylulose-5-phosphate (DXP) to 2-C-methyl-D-erythritol 4-phosphate (MEP). This chain is 1-deoxy-D-xylulose 5-phosphate reductoisomerase, found in Vibrio parahaemolyticus serotype O3:K6 (strain RIMD 2210633).